The following is a 189-amino-acid chain: Segregation and condensation protein B (189 aa).

The protein belongs to the ScpB family. Homodimer. Homodimerization may be required to stabilize the binding of ScpA to the Smc head domains. Component of a cohesin-like complex composed of ScpA, ScpB and the Smc homodimer, in which ScpA and ScpB bind to the head domain of Smc. The presence of the three proteins is required for the association of the complex with DNA.

The protein localises to the cytoplasm. Its function is as follows. Participates in chromosomal partition during cell division. May act via the formation of a condensin-like complex containing Smc and ScpA that pull DNA away from mid-cell into both cell halves. In Lachnoclostridium phytofermentans (strain ATCC 700394 / DSM 18823 / ISDg) (Clostridium phytofermentans), this protein is Segregation and condensation protein B.